Here is a 1100-residue protein sequence, read N- to C-terminus: Guanylate cyclase 2G (1100 aa).

A signal peptide spans 1 to 43; that stretch reads MASRARSEPPLEHRFYGGAESHAGHSSLVLTLFVVMLMTCLEA. At 44–481 the chain is on the extracellular side; the sequence is AKLTVGFHAP…GAGMTASVTA (438 aa). N-linked (GlcNAc...) asparagine glycans are attached at residues Asn-55, Asn-85, Asn-94, Asn-418, and Asn-443. Residues 482-502 traverse the membrane as a helical segment; it reads VIPTVTLLVVASAAAITGLML. The Cytoplasmic segment spans residues 503–1100; sequence WRLRGKVQNH…EEEAKVPEIL (598 aa). The Protein kinase domain maps to 549–826; the sequence is STVKISADCG…PAFPSIKKTL (278 aa). The Guanylate cyclase domain occupies 901–1031; sequence TIFFSDIVGF…DTVNMASRME (131 aa).

It belongs to the adenylyl cyclase class-4/guanylyl cyclase family. Homooligomer. May interact with NPR1/GC-A. Post-translationally, N-glycosylated. Expressed in lung, kidney and skeletal muscle. Low levels in intestine.

It is found in the cell membrane. It localises to the cytoplasm. The enzyme catalyses GTP = 3',5'-cyclic GMP + diphosphate. This Rattus norvegicus (Rat) protein is Guanylate cyclase 2G (Gucy2g).